The primary structure comprises 483 residues: Altronate oxidoreductase (483 aa).

18-29 is a binding site for NAD(+); the sequence is IIQFGEGNFLRA.

Belongs to the mannitol dehydrogenase family. UxaB subfamily.

The catalysed reaction is D-altronate + NAD(+) = keto-D-tagaturonate + NADH + H(+). It participates in carbohydrate metabolism; pentose and glucuronate interconversion. The sequence is that of Altronate oxidoreductase from Klebsiella pneumoniae (strain 342).